The sequence spans 355 residues: Probable butyrate kinase (355 aa).

It belongs to the acetokinase family.

The protein localises to the cytoplasm. The catalysed reaction is butanoate + ATP = butanoyl phosphate + ADP. This is Probable butyrate kinase from Listeria innocua serovar 6a (strain ATCC BAA-680 / CLIP 11262).